Here is a 511-residue protein sequence, read N- to C-terminus: Maturase K (511 aa).

This sequence belongs to the intron maturase 2 family. MatK subfamily.

It localises to the plastid. Usually encoded in the trnK tRNA gene intron. Probably assists in splicing its own and other chloroplast group II introns. The protein is Maturase K of Lathraea clandestina (Purple toothwort).